The following is a 228-amino-acid chain: Probable septum site-determining protein MinC (228 aa).

Belongs to the MinC family. Interacts with MinD and FtsZ.

Functionally, cell division inhibitor that blocks the formation of polar Z ring septums. Rapidly oscillates between the poles of the cell to destabilize FtsZ filaments that have formed before they mature into polar Z rings. Prevents FtsZ polymerization. The polypeptide is Probable septum site-determining protein MinC (Bacillus mycoides (strain KBAB4) (Bacillus weihenstephanensis)).